The following is a 325-amino-acid chain: uncharacterized protein (325 aa).

The tract at residues M1 to Q75 is disordered. The span at Y24–Y70 shows a compositional bias: pro residues. 4 helical membrane passes run A96 to A116, I153 to I173, L205 to F225, and L273 to I293.

It is found in the cell membrane. This is an uncharacterized protein from Mycobacterium tuberculosis (strain ATCC 25618 / H37Rv).